We begin with the raw amino-acid sequence, 283 residues long: Large ribosomal subunit protein uL2 (283 aa).

2 disordered regions span residues 37 to 59 and 219 to 283; these read AKKK…RGGG and HKGI…RNSK. Residues 256 to 269 show a composition bias toward basic residues; that stretch reads WGKRHMGVKTRNNK.

The protein belongs to the universal ribosomal protein uL2 family. As to quaternary structure, part of the 50S ribosomal subunit. Forms a bridge to the 30S subunit in the 70S ribosome.

One of the primary rRNA binding proteins. Required for association of the 30S and 50S subunits to form the 70S ribosome, for tRNA binding and peptide bond formation. It has been suggested to have peptidyltransferase activity; this is somewhat controversial. Makes several contacts with the 16S rRNA in the 70S ribosome. This chain is Large ribosomal subunit protein uL2, found in Mycoplasmoides gallisepticum (strain R(low / passage 15 / clone 2)) (Mycoplasma gallisepticum).